Reading from the N-terminus, the 1148-residue chain is Phospholipid-transporting ATPase IB (1148 aa).

Over M1–R54 the chain is Cytoplasmic. Residue T5 is modified to Phosphothreonine. The helical transmembrane segment at A55–T75 threads the bilayer. The Exoplasmic loop segment spans residues G76–T79. Residues T80–F100 traverse the membrane as a helical segment. Over K101–Q276 the chain is Cytoplasmic. A helical transmembrane segment spans residues I277–Y297. The Exoplasmic loop segment spans residues W298–L324. A helical membrane pass occupies residues T325–V345. Over K346 to V847 the chain is Cytoplasmic. Residue D388 is the 4-aspartylphosphate intermediate of the active site. D388, K389, T390, E488, F529, K552, R585, T665, G666, D667, R755, and K761 together coordinate ATP. D388 lines the Mg(2+) pocket. T390 serves as a coordination point for Mg(2+). Residue D781 participates in Mg(2+) binding. ATP is bound by residues N784 and D785. D785 provides a ligand contact to Mg(2+). Residues V848–F868 traverse the membrane as a helical segment. Over E869–R870 the chain is Exoplasmic loop. The helical transmembrane segment at W871–F891 threads the bilayer. The Cytoplasmic segment spans residues E892–K919. A helical membrane pass occupies residues V920–M940. Topologically, residues K941–Y957 are exoplasmic loop. The chain crosses the membrane as a helical span at residues L958–L978. The Cytoplasmic segment spans residues E979–H988. Residues L989–W1009 traverse the membrane as a helical segment. Residues P1010–T1023 are Exoplasmic loop-facing. Residues M1024–I1044 traverse the membrane as a helical segment. The Cytoplasmic segment spans residues E1045–K1148. The disordered stretch occupies residues P1102 to H1126.

It belongs to the cation transport ATPase (P-type) (TC 3.A.3) family. Type IV subfamily. As to quaternary structure, component of a P4-ATPase flippase complex which consists of a catalytic alpha subunit and an accessory beta subunit. Interacts with TMEM30A to form a flippase complex. The cofactor is Mg(2+). In terms of tissue distribution, expressed in retinal photoreceptor cells and testis.

Its subcellular location is the membrane. The protein resides in the golgi apparatus membrane. It localises to the endosome membrane. It is found in the cell membrane. The protein localises to the photoreceptor outer segment membrane. Its subcellular location is the photoreceptor inner segment membrane. The catalysed reaction is ATP + H2O + phospholipidSide 1 = ADP + phosphate + phospholipidSide 2.. It catalyses the reaction a 1,2-diacyl-sn-glycero-3-phospho-L-serine(out) + ATP + H2O = a 1,2-diacyl-sn-glycero-3-phospho-L-serine(in) + ADP + phosphate + H(+). It carries out the reaction a 1,2-diacyl-sn-glycero-3-phosphoethanolamine(in) + ATP + H2O = a 1,2-diacyl-sn-glycero-3-phosphoethanolamine(out) + ADP + phosphate + H(+). With respect to regulation, ATPase activity is stimulated by phosphatidylserine (PS) and minimally by phosphatidylethanolamine (PE). ATPase activity is inhibited by N-ethylmaleimide (NEM) and vanadate. Flippase activity is inhibited by NEM and 1,2-dioleoyl-sn-glycero-3-phospho-L-serine (DOPS). In terms of biological role, catalytic component of a P4-ATPase flippase complex which catalyzes the hydrolysis of ATP coupled to the transport of aminophospholipids from the outer to the inner leaflet of various membranes and ensures the maintenance of asymmetric distribution of phospholipids. Able to translocate phosphatidylserine, but not phosphatidylcholine. Phospholipid translocation seems also to be implicated in vesicle formation and in uptake of lipid signaling molecules. Reconstituted to liposomes, the ATP8A2:TMEM30A flippase complex predominantly transports phosphatidylserine (PS) and to a lesser extent phosphatidylethanolamine (PE). Phospholipid translocation is not associated with a countertransport of an inorganic ion or other charged substrate from the cytoplasmic side toward the exoplasm in connection with the phosphorylation from ATP. ATP8A2:TMEM30A may be involved in regulation of neurite outgrowth. Proposed to function in the generation and maintenance of phospholipid asymmetry in photoreceptor disk membranes and neuronal axon membranes. May be involved in vesicle trafficking in neuronal cells. Required for normal visual and auditory function; involved in photoreceptor and inner ear spiral ganglion cell survival. This is Phospholipid-transporting ATPase IB from Bos taurus (Bovine).